We begin with the raw amino-acid sequence, 166 residues long: NAD(P)H-quinone oxidoreductase subunit I, chloroplastic (166 aa).

2 consecutive 4Fe-4S ferredoxin-type domains span residues 55–84 and 95–124; these read GRIHFEFDKCIACEVCVRVCPIDLPVVDWK and LNYSIDFGICIFCGNCVEYCPTNCLSMTEE. The [4Fe-4S] cluster site is built by Cys-64, Cys-67, Cys-70, Cys-74, Cys-104, Cys-107, Cys-110, and Cys-114.

It belongs to the complex I 23 kDa subunit family. As to quaternary structure, NDH is composed of at least 16 different subunits, 5 of which are encoded in the nucleus. [4Fe-4S] cluster is required as a cofactor.

The protein localises to the plastid. It localises to the chloroplast thylakoid membrane. It carries out the reaction a plastoquinone + NADH + (n+1) H(+)(in) = a plastoquinol + NAD(+) + n H(+)(out). The enzyme catalyses a plastoquinone + NADPH + (n+1) H(+)(in) = a plastoquinol + NADP(+) + n H(+)(out). NDH shuttles electrons from NAD(P)H:plastoquinone, via FMN and iron-sulfur (Fe-S) centers, to quinones in the photosynthetic chain and possibly in a chloroplast respiratory chain. The immediate electron acceptor for the enzyme in this species is believed to be plastoquinone. Couples the redox reaction to proton translocation, and thus conserves the redox energy in a proton gradient. This Acanthospermum australe (Paraguayan starburr) protein is NAD(P)H-quinone oxidoreductase subunit I, chloroplastic.